Reading from the N-terminus, the 349-residue chain is Large ribosomal subunit protein uL2mz, N-terminal part (349 aa).

Belongs to the universal ribosomal protein uL2 family. As to quaternary structure, component of the mitochondrial ribosome large subunit.

It is found in the mitochondrion. This chain is Large ribosomal subunit protein uL2mz, N-terminal part, found in Arabidopsis thaliana (Mouse-ear cress).